Here is a 259-residue protein sequence, read N- to C-terminus: Snake venom serine protease homolog rhinocerase 3 (259 aa).

A signal peptide spans 1–17 (VLIRVLANLLLLQLSYA). A propeptide spanning residues 18 to 23 (QESSEL) is cleaved from the precursor. Residues 24-250 (VIGGDECDIN…YTDWIEGIIA (227 aa)) form the Peptidase S1 domain. 6 cysteine pairs are disulfide-bonded: C30-C164, C51-C67, C99-C257, C143-C211, C175-C190, and C201-C226. An N-linked (GlcNAc...) asparagine glycan is attached at N80. N252 is a glycosylation site (N-linked (GlcNAc...) asparagine).

This sequence belongs to the peptidase S1 family. Snake venom subfamily. As to expression, expressed by the venom gland.

It is found in the secreted. In terms of biological role, snake venom serine protease homolog that may act in the hemostasis system of the prey. The chain is Snake venom serine protease homolog rhinocerase 3 from Bitis rhinoceros (West African gaboon viper).